Consider the following 504-residue polypeptide: Calcium/calmodulin-dependent protein kinase type II (504 aa).

One can recognise a Protein kinase domain in the interval 65 to 351 (YQLIENLGDG…IHQFFQHPWI (287 aa)). ATP is bound by residues 71–79 (LGDGAFSQV) and K94. D188 serves as the catalytic Proton acceptor. At T252 the chain carries Phosphothreonine.

This sequence belongs to the protein kinase superfamily. CAMK Ser/Thr protein kinase family. CaMK subfamily. As to quaternary structure, interacts with sty1. Mg(2+) is required as a cofactor. In terms of processing, autophosphorylated.

The protein resides in the cytoplasm. The protein localises to the barrier septum. It localises to the forespore membrane. It is found in the ascus epiplasm. It catalyses the reaction L-seryl-[protein] + ATP = O-phospho-L-seryl-[protein] + ADP + H(+). It carries out the reaction L-threonyl-[protein] + ATP = O-phospho-L-threonyl-[protein] + ADP + H(+). Functionally, has a role in the regulation of G2/M transition during the mitotic cell cycle. This is Calcium/calmodulin-dependent protein kinase type II from Schizosaccharomyces pombe (strain 972 / ATCC 24843) (Fission yeast).